The sequence spans 205 residues: GTP cyclohydrolase 1 (205 aa).

Zn(2+) is bound by residues C94, H97, and C165.

The protein belongs to the GTP cyclohydrolase I family. As to quaternary structure, toroid-shaped homodecamer, composed of two pentamers of five dimers.

The enzyme catalyses GTP + H2O = 7,8-dihydroneopterin 3'-triphosphate + formate + H(+). It participates in cofactor biosynthesis; 7,8-dihydroneopterin triphosphate biosynthesis; 7,8-dihydroneopterin triphosphate from GTP: step 1/1. This Sinorhizobium medicae (strain WSM419) (Ensifer medicae) protein is GTP cyclohydrolase 1.